Consider the following 388-residue polypeptide: MSKRDYYEVLGVARTAGEGELKSAFRKLAMAYHPDRNPGDKEAEIKFKEVNEAYQTLSDGQKRAAYDRFGHAAFSQGAGGPGGPGFGADFGDFMSDIFDTFFGDARAGGAAGARGGRAGGRERGADLRYNLEITLEEAFTGKTETIRLPTSVTCEVCAGSGAKAGSKPRTCPTCGGYGRVRAAQGFFAIERTCPNCHGRGEIIDDPCTACGGAGRVTRERTLSVNVPAGVDDGLRIRLAGEGESGLRGGPAGDLYIFLSIKPHPFFQRDGADLFCRVPISMVTAALSGEITVPVIDGSHTTVRIPAGTQTNKQFRLKGKGMPVLRSRDVGDLYIQVFVETPQNLTKRQRELLQEFDQHGSQADNHPESAGFFSRVKEFFDGLSGSGRA.

One can recognise a J domain in the interval 5–70 (DYYEVLGVAR…QKRAAYDRFG (66 aa)). The segment at 141–219 (GKTETIRLPT…CGGAGRVTRE (79 aa)) adopts a CR-type zinc-finger fold. Zn(2+) is bound by residues cysteine 154, cysteine 157, cysteine 171, cysteine 174, cysteine 193, cysteine 196, cysteine 207, and cysteine 210. 4 CXXCXGXG motif repeats span residues 154–161 (CEVCAGSG), 171–178 (CPTCGGYG), 193–200 (CPNCHGRG), and 207–214 (CTACGGAG).

It belongs to the DnaJ family. In terms of assembly, homodimer. Zn(2+) is required as a cofactor.

Its subcellular location is the cytoplasm. Participates actively in the response to hyperosmotic and heat shock by preventing the aggregation of stress-denatured proteins and by disaggregating proteins, also in an autonomous, DnaK-independent fashion. Unfolded proteins bind initially to DnaJ; upon interaction with the DnaJ-bound protein, DnaK hydrolyzes its bound ATP, resulting in the formation of a stable complex. GrpE releases ADP from DnaK; ATP binding to DnaK triggers the release of the substrate protein, thus completing the reaction cycle. Several rounds of ATP-dependent interactions between DnaJ, DnaK and GrpE are required for fully efficient folding. Also involved, together with DnaK and GrpE, in the DNA replication of plasmids through activation of initiation proteins. This Methylobacterium nodulans (strain LMG 21967 / CNCM I-2342 / ORS 2060) protein is Chaperone protein DnaJ.